Reading from the N-terminus, the 226-residue chain is Large ribosomal subunit protein uL1 (226 aa).

Belongs to the universal ribosomal protein uL1 family. As to quaternary structure, part of the 50S ribosomal subunit.

Its function is as follows. Binds directly to 23S rRNA. The L1 stalk is quite mobile in the ribosome, and is involved in E site tRNA release. Functionally, protein L1 is also a translational repressor protein, it controls the translation of the L11 operon by binding to its mRNA. In Mycoplasma capricolum subsp. capricolum (strain California kid / ATCC 27343 / NCTC 10154), this protein is Large ribosomal subunit protein uL1.